The primary structure comprises 489 residues: Glutamate--tRNA ligase (489 aa).

The 'HIGH' region motif lies at 11–21 (PSPTGHLHIGG). The short motif at 253–257 (KLSKR) is the 'KMSKS' region element. An ATP-binding site is contributed by lysine 256.

This sequence belongs to the class-I aminoacyl-tRNA synthetase family. Glutamate--tRNA ligase type 1 subfamily. Monomer.

It is found in the cytoplasm. The enzyme catalyses tRNA(Glu) + L-glutamate + ATP = L-glutamyl-tRNA(Glu) + AMP + diphosphate. Its function is as follows. Catalyzes the attachment of glutamate to tRNA(Glu) in a two-step reaction: glutamate is first activated by ATP to form Glu-AMP and then transferred to the acceptor end of tRNA(Glu). The protein is Glutamate--tRNA ligase of Geobacillus stearothermophilus (Bacillus stearothermophilus).